The sequence spans 946 residues: Bifunctional glutamine synthetase adenylyltransferase/adenylyl-removing enzyme (946 aa).

Positions 1 to 440 (MKPLSSPLQQ…VFNELIGDDE (440 aa)) are adenylyl removase. An adenylyl transferase region spans residues 449-946 (SEQWRELWQD…ASWQKWLVEE (498 aa)).

The protein belongs to the GlnE family. It depends on Mg(2+) as a cofactor.

It catalyses the reaction [glutamine synthetase]-O(4)-(5'-adenylyl)-L-tyrosine + phosphate = [glutamine synthetase]-L-tyrosine + ADP. It carries out the reaction [glutamine synthetase]-L-tyrosine + ATP = [glutamine synthetase]-O(4)-(5'-adenylyl)-L-tyrosine + diphosphate. Functionally, involved in the regulation of glutamine synthetase GlnA, a key enzyme in the process to assimilate ammonia. When cellular nitrogen levels are high, the C-terminal adenylyl transferase (AT) inactivates GlnA by covalent transfer of an adenylyl group from ATP to specific tyrosine residue of GlnA, thus reducing its activity. Conversely, when nitrogen levels are low, the N-terminal adenylyl removase (AR) activates GlnA by removing the adenylyl group by phosphorolysis, increasing its activity. The regulatory region of GlnE binds the signal transduction protein PII (GlnB) which indicates the nitrogen status of the cell. This Escherichia coli (strain K12 / MC4100 / BW2952) protein is Bifunctional glutamine synthetase adenylyltransferase/adenylyl-removing enzyme.